Here is a 676-residue protein sequence, read N- to C-terminus: Serine/threonine-protein kinase Haspin homolog ALK2 (676 aa).

The interval 53–93 is disordered; the sequence is HKGSAEDESQSFFTSSDSPTSKTRPVGKTIENDDYYGKRSS. A compositionally biased stretch (polar residues) spans 62–75; sequence QSFFTSSDSPTSKT. The KEN box signature appears at 116-118; the sequence is KEN. The D box signature appears at 150–158; it reads RTPLRPISN. The segment at 228–312 is disordered; it reads SSRSVNDQDP…HKTSHSSLNK (85 aa). A compositionally biased stretch (polar residues) spans 232–259; it reads VNDQDPNFVQPKPTNSLQKKSSISSFHN. The region spanning 383–672 is the Protein kinase domain; that stretch reads LCDVKYILHD…TCGDLLSLKG (290 aa). Residues 389 to 397 and lysine 430 each bind ATP; that span reads ILHDLREAQ.

It belongs to the protein kinase superfamily. Ser/Thr protein kinase family. Haspin subfamily. Periodically phosphorylated during the cell cycle with a phosphorylation peak during mitosis and hyperphosphorylated after DNA damage.

It carries out the reaction L-seryl-[protein] + ATP = O-phospho-L-seryl-[protein] + ADP + H(+). The catalysed reaction is L-threonyl-[protein] + ATP = O-phospho-L-threonyl-[protein] + ADP + H(+). Functionally, serine/threonine haspin-like protein kinase involved in cell cycle regulation. The polypeptide is Serine/threonine-protein kinase Haspin homolog ALK2 (ALK2) (Saccharomyces cerevisiae (strain ATCC 204508 / S288c) (Baker's yeast)).